Consider the following 145-residue polypeptide: Small ribosomal subunit protein eS12A (145 aa).

This sequence belongs to the eukaryotic ribosomal protein eS12 family. In terms of assembly, component of the small ribosomal subunit (SSU). Mature yeast ribosomes consist of a small (40S) and a large (60S) subunit. The 40S small subunit contains 1 molecule of ribosomal RNA (18S rRNA) and at least 33 different proteins. The large 60S subunit contains 3 rRNA molecules (25S, 5.8S and 5S rRNA) and at least 46 different proteins.

It localises to the cytoplasm. Functionally, component of the ribosome, a large ribonucleoprotein complex responsible for the synthesis of proteins in the cell. The small ribosomal subunit (SSU) binds messenger RNAs (mRNAs) and translates the encoded message by selecting cognate aminoacyl-transfer RNA (tRNA) molecules. The large subunit (LSU) contains the ribosomal catalytic site termed the peptidyl transferase center (PTC), which catalyzes the formation of peptide bonds, thereby polymerizing the amino acids delivered by tRNAs into a polypeptide chain. The nascent polypeptides leave the ribosome through a tunnel in the LSU and interact with protein factors that function in enzymatic processing, targeting, and the membrane insertion of nascent chains at the exit of the ribosomal tunnel. This Schizosaccharomyces pombe (strain 972 / ATCC 24843) (Fission yeast) protein is Small ribosomal subunit protein eS12A (rps1201).